The chain runs to 361 residues: Phospho-N-acetylmuramoyl-pentapeptide-transferase (361 aa).

A run of 10 helical transmembrane segments spans residues 27–47 (GAFF…INLL), 72–92 (TPTM…LLWA), 98–118 (YVWL…MDDF), 135–155 (LAMG…LHPE), 169–189 (TLIN…AGSA), 200–220 (GLAI…AYAV), 240–260 (IFVF…YNAP), 263–283 (AVFM…AIAV), 289–309 (IVLV…IIQV), and 338–358 (QIVI…LATL).

It belongs to the glycosyltransferase 4 family. MraY subfamily. The cofactor is Mg(2+).

The protein localises to the cell inner membrane. It carries out the reaction UDP-N-acetyl-alpha-D-muramoyl-L-alanyl-gamma-D-glutamyl-meso-2,6-diaminopimeloyl-D-alanyl-D-alanine + di-trans,octa-cis-undecaprenyl phosphate = di-trans,octa-cis-undecaprenyl diphospho-N-acetyl-alpha-D-muramoyl-L-alanyl-D-glutamyl-meso-2,6-diaminopimeloyl-D-alanyl-D-alanine + UMP. It participates in cell wall biogenesis; peptidoglycan biosynthesis. Catalyzes the initial step of the lipid cycle reactions in the biosynthesis of the cell wall peptidoglycan: transfers peptidoglycan precursor phospho-MurNAc-pentapeptide from UDP-MurNAc-pentapeptide onto the lipid carrier undecaprenyl phosphate, yielding undecaprenyl-pyrophosphoryl-MurNAc-pentapeptide, known as lipid I. This is Phospho-N-acetylmuramoyl-pentapeptide-transferase from Dinoroseobacter shibae (strain DSM 16493 / NCIMB 14021 / DFL 12).